The sequence spans 570 residues: Auxin efflux carrier component 6 (570 aa).

Residues 1–6 lie on the Extracellular side of the membrane; it reads MITGNE. A helical transmembrane segment spans residues 7–27; sequence FYTVMCAMAPLYFAMFVAYGS. Residues 28–38 lie on the Cytoplasmic side of the membrane; sequence VKWCKIFTPAQ. The chain crosses the membrane as a helical span at residues 39 to 59; sequence CSGINRFVSVFAVPVLSFHFI. A (indol-3-yl)acetate-binding site is contributed by Val-51. Topologically, residues 60–70 are extracellular; that stretch reads SQNNPYKMDTM. A helical membrane pass occupies residues 71 to 91; that stretch reads FILADTLSKIFVFVLLSLWAV. Over 92–100 the chain is Cytoplasmic; it reads FFKAGGLDW. A helical transmembrane segment spans residues 101–121; the sequence is LITLFSIATLPNTLVMGIPLL. (indol-3-yl)acetate is bound by residues Asn-112 and Leu-114. Topologically, residues 122–131 are extracellular; the sequence is QAMYGDYTQT. The helical transmembrane segment at 132–152 threads the bilayer; the sequence is LMVQLVVLQCIIWYTLLLFLF. Residue Tyr-145 coordinates (indol-3-yl)acetate. Residues 153–430 lie on the Cytoplasmic side of the membrane; it reads ELRAARLLIR…LSRNPNTYSS (278 aa). A phosphoserine mark is found at Ser-230 and Ser-308. Residues 431-451 form a helical membrane-spanning segment; it reads LLGLVWSLISFKWNIPMPNIV. Topologically, residues 452-454 are extracellular; sequence DFS. The helical transmembrane segment at 455-475 threads the bilayer; it reads IKIISDAGLGMAMFSLGLFMA. Topologically, residues 476 to 491 are cytoplasmic; the sequence is LQPKMIPCGAKKATMG. Residues 492 to 512 form a helical membrane-spanning segment; the sequence is MLIRFISGPLFMAGASLLVGL. Over 513–515 the chain is Extracellular; that stretch reads RGS. The helical transmembrane segment at 516–536 threads the bilayer; sequence RLHAAIVQAALPQGIVPFVFA. 2 residues coordinate (indol-3-yl)acetate: Ile-530 and Val-531. Residues 537-549 lie on the Cytoplasmic side of the membrane; the sequence is REYNLHPDLLSTL. A helical transmembrane segment spans residues 550–570; that stretch reads VIFGMIVSLPVTILYYVLLGL.

It belongs to the auxin efflux carrier (TC 2.A.69.1) family. As to quaternary structure, homodimer. In terms of tissue distribution, expressed in the vasculature of the primary root, cotyledons, floral stem, sepals and the main transmitting tract of the reproductive silique. Expressed in embryos, shoot meristem, root tip and lateral root meristems. Expressed in the nectaries and the floral organ boundaries of the anthers. Detected in pollen. Expressed in broad subepidermal domains that narrowed to sites of vein formation. Expressed in veins of mature leaves.

It localises to the endoplasmic reticulum membrane. Functionally, component of the intracellular auxin-transport pathway. Regulates auxin transport and auxin homeostasis. Directly involved in the regulation of nectar production. Involved in unfolded protein response (UPR) activation. Involved in the control of vein patterning. Redundantly with PIN8, inhibits the vein-formation-promoting functions of PIN5. PIN5, PIN6, and PIN8 control vein network geometry, but they are expressed in mutually exclusive domains of leaf vascular cells. The polypeptide is Auxin efflux carrier component 6 (Arabidopsis thaliana (Mouse-ear cress)).